The primary structure comprises 1015 residues: DNA polymerase catalytic subunit (1015 aa).

Belongs to the DNA polymerase type-B family. Forms a complex with the major DNA-binding protein BALF2, the DNA polymerase processivity factor BMRF1, and the alkaline exonuclease BGLF5. Interacts with the putative helicase-primase complex composed of BBLF4, BSLF1 and BBLF2/3 proteins; these interactions may coordinate leading and lagging strand DNA synthesis at the replication fork.

The protein resides in the host nucleus. The enzyme catalyses DNA(n) + a 2'-deoxyribonucleoside 5'-triphosphate = DNA(n+1) + diphosphate. Its function is as follows. Replicates viral genomic DNA in the late phase of lytic infection, producing long concatemeric DNA. The replication complex is composed of six viral proteins: the DNA polymerase, processivity factor, primase, primase-associated factor, helicase, and ssDNA-binding protein. This is DNA polymerase catalytic subunit from Homo sapiens (Human).